Consider the following 627-residue polypeptide: tRNA uridine 5-carboxymethylaminomethyl modification enzyme MnmG (627 aa).

Residues 13–18 (GGGHAG), Val-125, and Ser-180 each bind FAD. NAD(+) is bound at residue 274–288 (GPRYCPSIEDKVVRF). Gln-371 contacts FAD.

This sequence belongs to the MnmG family. Homodimer. Heterotetramer of two MnmE and two MnmG subunits. Requires FAD as cofactor.

Its subcellular location is the cytoplasm. Its function is as follows. NAD-binding protein involved in the addition of a carboxymethylaminomethyl (cmnm) group at the wobble position (U34) of certain tRNAs, forming tRNA-cmnm(5)s(2)U34. The chain is tRNA uridine 5-carboxymethylaminomethyl modification enzyme MnmG from Francisella tularensis subsp. novicida (strain U112).